Here is a 1142-residue protein sequence, read N- to C-terminus: Protein lin-25 (1142 aa).

The segment covering 600 to 613 (IEEEIEEEEEDIEP) has biased composition (acidic residues). A disordered region spans residues 600 to 706 (IEEEIEEEEE…EKPKEPLEPT (107 aa)). Composition is skewed to basic and acidic residues over residues 614–627 (EVVKEMKESGTEKE), 652–662 (DEQKTEEKMDT), and 679–703 (DPPKVEEPAERINQEKPEEKPKEPL).

The protein resides in the nucleus. It is found in the cytoplasm. Participates in the inductive signaling pathway downstream of let-60 Ras and the RAF/MAP kinase cascade to regulate specification and differentiation of many cell types. Positively regulates the fate of vulval precursor cells. Required for induction of the P12 and excretory duct cell fates. In males, it is also required for proper formation of spicules. Does not function in the signaling pathway that promotes exit from pachytene. In Caenorhabditis briggsae, this protein is Protein lin-25.